The sequence spans 856 residues: Leucine--tRNA ligase (856 aa).

Positions 53–63 (PYPSGNLHMGH) match the 'HIGH' region motif. A 'KMSKS' region motif is present at residues 622–626 (KMSKS). Lys-625 serves as a coordination point for ATP.

This sequence belongs to the class-I aminoacyl-tRNA synthetase family.

Its subcellular location is the cytoplasm. The catalysed reaction is tRNA(Leu) + L-leucine + ATP = L-leucyl-tRNA(Leu) + AMP + diphosphate. This is Leucine--tRNA ligase from Prochlorococcus marinus (strain MIT 9312).